We begin with the raw amino-acid sequence, 312 residues long: Acetyl-coenzyme A carboxylase carboxyl transferase subunit alpha (312 aa).

One can recognise a CoA carboxyltransferase C-terminal domain in the interval 36–286 (RLDKEVKSIY…KEYFLDALRT (251 aa)).

It belongs to the AccA family. In terms of assembly, acetyl-CoA carboxylase is a heterohexamer composed of biotin carboxyl carrier protein (AccB), biotin carboxylase (AccC) and two subunits each of ACCase subunit alpha (AccA) and ACCase subunit beta (AccD).

It localises to the cytoplasm. The catalysed reaction is N(6)-carboxybiotinyl-L-lysyl-[protein] + acetyl-CoA = N(6)-biotinyl-L-lysyl-[protein] + malonyl-CoA. The protein operates within lipid metabolism; malonyl-CoA biosynthesis; malonyl-CoA from acetyl-CoA: step 1/1. In terms of biological role, component of the acetyl coenzyme A carboxylase (ACC) complex. First, biotin carboxylase catalyzes the carboxylation of biotin on its carrier protein (BCCP) and then the CO(2) group is transferred by the carboxyltransferase to acetyl-CoA to form malonyl-CoA. The sequence is that of Acetyl-coenzyme A carboxylase carboxyl transferase subunit alpha from Helicobacter pylori (strain Shi470).